A 231-amino-acid polypeptide reads, in one-letter code: Transmembrane gamma-carboxyglutamic acid protein 3 (231 aa).

The propeptide occupies 1–19 (MAVFLEAKNAHAVLKRFPR). The Gla domain occupies 20 to 65 (ANEFLEELRQGTIERECMEEICSYEEVKEVFENKEKTMEFWKGYPN). At 20-78 (ANEFLEELRQGTIERECMEEICSYEEVKEVFENKEKTMEFWKGYPNAVYSVRDPSQSSD) the chain is on the extracellular side. 13 positions are modified to 4-carboxyglutamate: glutamate 22, glutamate 25, glutamate 26, glutamate 33, glutamate 35, glutamate 38, glutamate 39, glutamate 44, glutamate 45, glutamate 48, glutamate 51, glutamate 54, and glutamate 58. A disulfide bridge links cysteine 36 with cysteine 41. A helical membrane pass occupies residues 79–101 (AMYVVVPLLGVVLLIVIALFIIW). The Cytoplasmic portion of the chain corresponds to 102 to 231 (RCQLQKATRH…IVAASPSADK (130 aa)). Disordered regions lie at residues 140–165 (HSQG…SRGG) and 184–231 (RLSS…SADK). A compositionally biased stretch (polar residues) spans 201–212 (QEGSSEEASVSY).

Gla residues are produced after subsequent post-translational modifications of glutamate by a vitamin K-dependent gamma-carboxylase.

It is found in the membrane. This Mus musculus (Mouse) protein is Transmembrane gamma-carboxyglutamic acid protein 3 (Prrg3).